Reading from the N-terminus, the 328-residue chain is Malate dehydrogenase (328 aa).

Position 12 to 18 (12 to 18) interacts with NAD(+); sequence GAAGQIA. 2 residues coordinate substrate: R93 and R99. Residues N106, Q113, and 130–132 contribute to the NAD(+) site; that span reads VGN. The substrate site is built by N132 and R163. Residue H188 is the Proton acceptor of the active site.

This sequence belongs to the LDH/MDH superfamily. MDH type 2 family.

The catalysed reaction is (S)-malate + NAD(+) = oxaloacetate + NADH + H(+). In terms of biological role, catalyzes the reversible oxidation of malate to oxaloacetate. This Burkholderia lata (strain ATCC 17760 / DSM 23089 / LMG 22485 / NCIMB 9086 / R18194 / 383) protein is Malate dehydrogenase.